Consider the following 316-residue polypeptide: MTNEFHHVTVLLHETIDYLDVKPDGVYVDATLGGAGHSEYLLSKLSPKGHLYAFDQDATAIEHAKKRLAPYIEKGMVTFVQDNFRHLKLQLEKLGVDEIDGICYDLGVSSPQLDERERGFSYKQDAPLDMRMNRHADFSAYQVVNDYDYHDLVRIFFKYGEDKFSKQIARKIEQARQIKPIETTTELAEIIKSAKPAKELKKKGHPAKQIFQAIRIEVNDELGAADESIQQAIDLLAVDGRISVITFHSLEDRLTKQLFKEASTVDVPKGLPFIPDDLKPKLELISRKPILPSAEELELNNRAHSAKLRVAKKVHK.

Residues 35-37, D55, F84, D105, and Q112 each bind S-adenosyl-L-methionine; that span reads AGH.

Belongs to the methyltransferase superfamily. RsmH family.

It localises to the cytoplasm. The catalysed reaction is cytidine(1402) in 16S rRNA + S-adenosyl-L-methionine = N(4)-methylcytidine(1402) in 16S rRNA + S-adenosyl-L-homocysteine + H(+). Its function is as follows. Specifically methylates the N4 position of cytidine in position 1402 (C1402) of 16S rRNA. The chain is Ribosomal RNA small subunit methyltransferase H from Streptococcus gordonii (strain Challis / ATCC 35105 / BCRC 15272 / CH1 / DL1 / V288).